A 559-amino-acid chain; its full sequence is 2,3-bisphosphoglycerate-independent phosphoglycerate mutase (559 aa).

Residues D28 and S81 each contribute to the Mn(2+) site. Residue S81 is the Phosphoserine intermediate of the active site. Substrate-binding positions include H140, 170-171 (RD), R206, R213, 286-289 (RADR), and K361. D430, H434, D471, H472, and H501 together coordinate Mn(2+).

It belongs to the BPG-independent phosphoglycerate mutase family. As to quaternary structure, monomer. The cofactor is Mn(2+). The N-terminus is blocked. As to expression, found ubiquitously in germinating seed.

It is found in the cytoplasm. The enzyme catalyses (2R)-2-phosphoglycerate = (2R)-3-phosphoglycerate. It functions in the pathway carbohydrate degradation; glycolysis; pyruvate from D-glyceraldehyde 3-phosphate: step 3/5. Functionally, catalyzes the interconversion of 2-phosphoglycerate and 3-phosphoglycerate. In Zea mays (Maize), this protein is 2,3-bisphosphoglycerate-independent phosphoglycerate mutase.